The chain runs to 689 residues: Solute carrier family 22 member 23 (689 aa).

2 disordered regions span residues 1–55 and 162–188; these read MAID…PLPA and TASWGTTSNRSNSSDTPPLPSPPGKGN. The N-linked (GlcNAc...) asparagine glycan is linked to Asn24. Over residues 165–177 the composition is skewed to polar residues; that stretch reads WGTTSNRSNSSDT. 2 helical membrane passes run 229–249 and 253–273; these read FSLLVGLIFGYLITGCIADWV and PVLLFSTIFILIFGLTVALSV. An N-linked (GlcNAc...) asparagine glycan is attached at Asn274. The next 8 helical transmembrane spans lie at 283–303, 310–330, 339–359, 466–486, 489–509, 541–561, 572–592, and 601–621; these read FFEGFCLAGIILTLYALRIEL, FIITMVASFVAMAGQFLMPGL, VLQALIICPFLLMLLYWSIFP, TMASIALASCLAMCLVVKFLG, GGLLLFMILTALASLLQLGLL, IAFSIVGMFASHAVGSLSVFF, CGGLGLVLASAGFGMLTAPII, and FLHHIIFACCTLICIICILLL.

It belongs to the major facilitator (TC 2.A.1) superfamily. Organic cation transporter (TC 2.A.1.19) family.

Its subcellular location is the membrane. The chain is Solute carrier family 22 member 23 (Slc22a23) from Mus musculus (Mouse).